The chain runs to 329 residues: Solute carrier family 35 member B1 (329 aa).

The next 8 helical transmembrane spans lie at 21-41 (AVCF…QETI), 60-80 (TLVF…IQFF), 91-111 (WLYG…NSAL), 142-162 (YPMA…LFLY), 175-195 (VFGF…LTGV), 220-240 (TLVL…LAFT), 250-270 (ILLF…TVVY), and 292-312 (VLLF…LVFL). Residues 325 to 329 (KKTTH) carry the Di-lysine motif motif.

The protein belongs to the nucleotide-sugar transporter family. SLC35B subfamily.

Its subcellular location is the endoplasmic reticulum membrane. Its function is as follows. Probable sugar transporter. This Danio rerio (Zebrafish) protein is Solute carrier family 35 member B1 (slc35b1).